The primary structure comprises 341 residues: Methionine import ATP-binding protein MetN 2 (341 aa).

The ABC transporter domain maps to 2-241 (IKLNQIVKRY…PQHEVTKRFV (240 aa)). 38 to 45 (GFSGAGKS) is an ATP binding site.

Belongs to the ABC transporter superfamily. Methionine importer (TC 3.A.1.24) family. The complex is composed of two ATP-binding proteins (MetN), two transmembrane proteins (MetI) and a solute-binding protein (MetQ).

It localises to the cell membrane. The enzyme catalyses L-methionine(out) + ATP + H2O = L-methionine(in) + ADP + phosphate + H(+). It carries out the reaction D-methionine(out) + ATP + H2O = D-methionine(in) + ADP + phosphate + H(+). Part of the ABC transporter complex MetNIQ involved in methionine import. Responsible for energy coupling to the transport system. The sequence is that of Methionine import ATP-binding protein MetN 2 from Staphylococcus epidermidis (strain ATCC 35984 / DSM 28319 / BCRC 17069 / CCUG 31568 / BM 3577 / RP62A).